The sequence spans 291 residues: Acetylglutamate kinase (291 aa).

Residues 65–66 (GG), R87, and N186 contribute to the substrate site.

Belongs to the acetylglutamate kinase family. ArgB subfamily.

The protein localises to the cytoplasm. It carries out the reaction N-acetyl-L-glutamate + ATP = N-acetyl-L-glutamyl 5-phosphate + ADP. It participates in amino-acid biosynthesis; L-arginine biosynthesis; N(2)-acetyl-L-ornithine from L-glutamate: step 2/4. Its function is as follows. Catalyzes the ATP-dependent phosphorylation of N-acetyl-L-glutamate. The polypeptide is Acetylglutamate kinase (Mycolicibacterium vanbaalenii (strain DSM 7251 / JCM 13017 / BCRC 16820 / KCTC 9966 / NRRL B-24157 / PYR-1) (Mycobacterium vanbaalenii)).